We begin with the raw amino-acid sequence, 456 residues long: Putrescine--pyruvate aminotransferase (456 aa).

Residue tyrosine 156 participates in substrate binding. A pyridoxal 5'-phosphate-binding site is contributed by aspartate 262. Residue lysine 291 is modified to N6-(pyridoxal phosphate)lysine. Residues glycine 322 and arginine 417 each contribute to the substrate site.

It belongs to the class-III pyridoxal-phosphate-dependent aminotransferase family. The cofactor is pyridoxal 5'-phosphate.

The catalysed reaction is putrescine + pyruvate = 4-aminobutanal + L-alanine. Its pathway is amine and polyamine degradation; putrescine degradation; 4-aminobutanal from putrescine (transaminase route). Functionally, involved in the putrescine catabolism. Catalyzes the transfer of the amino group from putrescine to pyruvate to yield 4-aminobutanal and alanine. This chain is Putrescine--pyruvate aminotransferase, found in Pseudomonas aeruginosa (strain ATCC 15692 / DSM 22644 / CIP 104116 / JCM 14847 / LMG 12228 / 1C / PRS 101 / PAO1).